Consider the following 1156-residue polypeptide: ATP-dependent RNA helicase glh-4 (1156 aa).

Disordered stretches follow at residues 1–81 (MSFS…GAPS), 194–213 (TGVGASEVPTSKPSSFGQQP), 231–423 (SSSG…DSST), and 436–522 (HRAS…SGLG). Residues 12-22 (AEVKVAEDVPE) show a composition bias toward basic and acidic residues. Residues 24 to 34 (NVPPPVEPPRA) are compositionally biased toward pro residues. Polar residues-rich tracts occupy residues 60 to 73 (ITTSKTFGSQTTPK), 194 to 211 (TGVGASEVPTSKPSSFGQ), and 243 to 258 (TESSGFPTKETSTSQP). Positions 259–281 (GFGGDSSTGFGSGLKAGFGGHGA) are enriched in gly residues. Residues 307 to 319 (ASSSNESAFGQQS) are compositionally biased toward polar residues. Gly residues-rich tracts occupy residues 321–332 (GFGGATKNGFGG) and 342–358 (SKAGFGGTSSSGIGGQK). Composition is skewed to polar residues over residues 362–371 (TESSGFPTKE) and 395–406 (PSTTDSSSGQQT). The span at 408–423 (GFGGASKPGFGGDSST) shows a compositional bias: gly residues. 2 stretches are compositionally biased toward polar residues: residues 440–451 (TAENSGLPTETT) and 464–476 (ASSSNESAFGQQS). Residues 478 to 489 (GFGGATKNGFGG) show a composition bias toward gly residues. 5 CCHC-type zinc fingers span residues 570–587 (RGCHNCGEEGHISKECDK), 593–610 (FPCRNCEQLGHFASDCDQ), 616–633 (GPCRNCGIEGHFAVDCDQ), 639–656 (GPCRNCGQEGHFAKDCQN), and 665–682 (EPCRRCAEEGHWGYECPT). A Q motif motif is present at residues 736 to 764 (SFDGFKILPQDLHDNLKRMKMNRPTPIQR). The Helicase ATP-binding domain maps to 767–951 (FFPIMHGNDV…LPKFVKEGYT (185 aa)). 780-787 (AHTGSGKT) serves as a coordination point for ATP. A DEAD box motif is present at residues 897–900 (DEAD). The Helicase C-terminal domain maps to 986 to 1139 (GIDENTVTLL…EVPEWLTEGA (154 aa)). Residues 1135–1156 (LTEGAGHQEEGGDDWNEQEQEW) form a disordered region. Residues 1145–1156 (GGDDWNEQEQEW) are compositionally biased toward acidic residues.

Belongs to the DEAD box helicase family. DDX4/VASA subfamily. Interacts (via C-terminus) with kgb-1.

It carries out the reaction ATP + H2O = ADP + phosphate + H(+). In terms of biological role, probable ATP-binding RNA helicase. May act redundantly with the P-granule component glh-1 to regulate the formation of the granular structure of P-granules in embryos. May protect somatic cells from excessive apoptosis during normal development. This is ATP-dependent RNA helicase glh-4 from Caenorhabditis elegans.